A 352-amino-acid chain; its full sequence is C-C chemokine receptor type 5 (352 aa).

Residues 1–30 (MDYQVSSPTYDIDYYTSEPCQKINVKQIAA) are Extracellular-facing. Tyr3 carries the post-translational modification Sulfotyrosine. O-linked (GalNAc...) serine glycans are attached at residues Ser6 and Ser7. Tyr10, Tyr14, and Tyr15 each carry sulfotyrosine. Disulfide bonds link Cys20–Cys269 and Cys101–Cys178. A helical membrane pass occupies residues 31–58 (RLLPPLYSLVFIFGFVGNILVVLILINC). Residues 59–68 (KRLKSMTDIY) lie on the Cytoplasmic side of the membrane. A helical membrane pass occupies residues 69-89 (LLNLAISDLLFLLTVPFWAHY). Residues 90–102 (AAAQWDFGNTMCQ) lie on the Extracellular side of the membrane. Residues 103–124 (LLTGLYFIGFFSGIFFIILLTI) traverse the membrane as a helical segment. Topologically, residues 125-141 (DRYLAIVHAVFALKART) are cytoplasmic. Residues 142–166 (VTFGVVTSVITWVVAVFASLPGIIF) form a helical membrane-spanning segment. The Extracellular portion of the chain corresponds to 167 to 198 (TRSQREGLHYTCSSHFPYSQYQFWKNFQTLKI). A helical transmembrane segment spans residues 199-218 (VILGLVLPLLVMVICYSGIL). Topologically, residues 219 to 235 (KTLLRCRNEKKRHRAVR) are cytoplasmic. Residues 236-260 (LIFTIMIVYFLFWAPYNIVLLLNTF) traverse the membrane as a helical segment. The Extracellular portion of the chain corresponds to 261–277 (QEFFGLNNCSSSNRLDQ). The helical transmembrane segment at 278-301 (AMQVTETLGMTHCCINPIIYAFVG) threads the bilayer. Residues 302 to 352 (EKFRNYLLVFFQKHIAKRFCKCCSIFQQEAPERASSVYTRSTGEQEISVGL) lie on the Cytoplasmic side of the membrane. 3 S-palmitoyl cysteine lipidation sites follow: Cys321, Cys323, and Cys324. Phosphoserine; by BARK1 is present on residues Ser336, Ser337, Ser342, and Ser349.

It belongs to the G-protein coupled receptor 1 family. As to quaternary structure, interacts with PRAF2. Efficient ligand binding to CCL3/MIP-1alpha and CCL4/MIP-1beta requires sulfation, O-glycosylation and sialic acid modifications. Glycosylation on Ser-6 is required for efficient binding of CCL4. Interacts with GRK2. Interacts with ARRB1 and ARRB2. Interacts with CNIH4. Interacts with S100A4; this interaction stimulates T-lymphocyte chemotaxis. Sulfated on at least 2 of the N-terminal tyrosines. Sulfation is required for efficient binding of the chemokines, CCL3 and CCL4. Post-translationally, palmitoylation in the C-terminal is important for cell surface expression. In terms of processing, phosphorylation on serine residues in the C-terminal is stimulated by binding CC chemokines especially by APO-RANTES. O-glycosylated, but not N-glycosylated. Ser-6 appears to be the major site even if Ser-7 may be also O-glycosylated. Also sialylated glycans present which contribute to chemokine binding. Thr-16 and Ser-17 may also be glycosylated and, if so, with small moieties such as a T-antigen.

Its subcellular location is the cell membrane. Its function is as follows. Receptor for a number of inflammatory CC-chemokines including CCL3/MIP-1-alpha, CCL4/MIP-1-beta and RANTES and subsequently transduces a signal by increasing the intracellular calcium ion level. May play a role in the control of granulocytic lineage proliferation or differentiation. Participates in T-lymphocyte migration to the infection site by acting as a chemotactic receptor. This chain is C-C chemokine receptor type 5 (CCR5), found in Papio anubis (Olive baboon).